The primary structure comprises 333 residues: Plasminogen (333 aa).

A Kringle 5 domain is found at 4 to 83; it reads CMFGNGKGYR…LFDYCDVPQC (80 aa). Cystine bridges form between Cys4/Cys83, Cys25/Cys66, Cys54/Cys78, Cys90/Cys208, Cys100/Cys108, Cys130/Cys146, Cys222/Cys289, Cys252/Cys268, and Cys279/Cys307. One can recognise a Peptidase S1 domain in the interval 104–331; that stretch reads VVGGCVANPH…FVTWIEGIMR (228 aa). Ser120 is modified (phosphoserine). Residues His145 and Asp188 each act as charge relay system in the active site. The active-site Charge relay system is the Ser283.

It belongs to the peptidase S1 family. Plasminogen subfamily. As to quaternary structure, interacts with CSPG4 and AMOT. Interacts (via the Kringle domains) with HRG; the interaction tethers PLG to the cell surface and enhances its activation. Interacts (via Kringle 4 domain) with ADA; the interaction stimulates PLG activation when in complex with DPP4. Angiostatin: Interacts with ATP5F1A; the interaction inhibits most of the angiogenic effects of angiostatin.

The protein localises to the secreted. The enzyme catalyses Preferential cleavage: Lys-|-Xaa &gt; Arg-|-Xaa, higher selectivity than trypsin. Converts fibrin into soluble products.. With respect to regulation, converted into plasmin by plasminogen activators, both plasminogen and its activator being bound to fibrin. Activated with urokinase and high concentrations of streptokinase. Plasmin dissolves the fibrin of blood clots and acts as a proteolytic factor in a variety of other processes including embryonic development, tissue remodeling, tumor invasion, and inflammation. In ovulation, weakens the walls of the Graafian follicle. It activates the urokinase-type plasminogen activator, collagenases and several complement zymogens, such as C1, C4 and C5. Cleavage of fibronectin and laminin leads to cell detachment and apoptosis. Also cleaves fibrin, thrombospondin and von Willebrand factor. Its role in tissue remodeling and tumor invasion may be modulated by CSPG4. Binds to cells. The chain is Plasminogen (PLG) from Canis lupus familiaris (Dog).